We begin with the raw amino-acid sequence, 695 residues long: DNA ligase (695 aa).

Residues D44 to D48, S93 to L94, and E123 contribute to the NAD(+) site. K125 functions as the N6-AMP-lysine intermediate in the catalytic mechanism. 4 residues coordinate NAD(+): R146, E184, K300, and K324. Positions 418, 421, 436, and 442 each coordinate Zn(2+). In terms of domain architecture, BRCT spans S605–R694.

The protein belongs to the NAD-dependent DNA ligase family. LigA subfamily. Mg(2+) serves as cofactor. It depends on Mn(2+) as a cofactor.

It carries out the reaction NAD(+) + (deoxyribonucleotide)n-3'-hydroxyl + 5'-phospho-(deoxyribonucleotide)m = (deoxyribonucleotide)n+m + AMP + beta-nicotinamide D-nucleotide.. Its function is as follows. DNA ligase that catalyzes the formation of phosphodiester linkages between 5'-phosphoryl and 3'-hydroxyl groups in double-stranded DNA using NAD as a coenzyme and as the energy source for the reaction. It is essential for DNA replication and repair of damaged DNA. The sequence is that of DNA ligase from Acidothermus cellulolyticus (strain ATCC 43068 / DSM 8971 / 11B).